The sequence spans 317 residues: Sulfate adenylyltransferase subunit 2 (317 aa).

2 disordered regions span residues 1 to 21 (MPDSRPDTELSNPQSAKAPLD) and 298 to 317 (RAIDRDQSGSMEKKKREGYF).

Belongs to the PAPS reductase family. CysD subfamily. Heterodimer composed of CysD, the smaller subunit, and CysN.

The enzyme catalyses sulfate + ATP + H(+) = adenosine 5'-phosphosulfate + diphosphate. Its pathway is sulfur metabolism; hydrogen sulfide biosynthesis; sulfite from sulfate: step 1/3. Functionally, with CysN forms the ATP sulfurylase (ATPS) that catalyzes the adenylation of sulfate producing adenosine 5'-phosphosulfate (APS) and diphosphate, the first enzymatic step in sulfur assimilation pathway. APS synthesis involves the formation of a high-energy phosphoric-sulfuric acid anhydride bond driven by GTP hydrolysis by CysN coupled to ATP hydrolysis by CysD. This chain is Sulfate adenylyltransferase subunit 2, found in Rhizobium etli (strain ATCC 51251 / DSM 11541 / JCM 21823 / NBRC 15573 / CFN 42).